A 276-amino-acid chain; its full sequence is Putative pyruvate, phosphate dikinase regulatory protein 1 (276 aa).

157 to 164 (GVSRTSKT) lines the ADP pocket.

It belongs to the pyruvate, phosphate/water dikinase regulatory protein family. PDRP subfamily.

The catalysed reaction is N(tele)-phospho-L-histidyl/L-threonyl-[pyruvate, phosphate dikinase] + ADP = N(tele)-phospho-L-histidyl/O-phospho-L-threonyl-[pyruvate, phosphate dikinase] + AMP + H(+). It carries out the reaction N(tele)-phospho-L-histidyl/O-phospho-L-threonyl-[pyruvate, phosphate dikinase] + phosphate + H(+) = N(tele)-phospho-L-histidyl/L-threonyl-[pyruvate, phosphate dikinase] + diphosphate. Functionally, bifunctional serine/threonine kinase and phosphorylase involved in the regulation of the pyruvate, phosphate dikinase (PPDK) by catalyzing its phosphorylation/dephosphorylation. The sequence is that of Putative pyruvate, phosphate dikinase regulatory protein 1 from Staphylococcus haemolyticus (strain JCSC1435).